Consider the following 690-residue polypeptide: Xylosyl- and glucuronyltransferase LARGE2 (690 aa).

Topologically, residues 1–8 (MLPRGRPR) are cytoplasmic. The helical; Signal-anchor for type II membrane protein transmembrane segment at 9–29 (AMGAAVLLLLLLLVVGFFLFG) threads the bilayer. The Lumenal portion of the chain corresponds to 30–690 (RDPDYGLGTT…TALQQARSRA (661 aa)). N-linked (GlcNAc...) asparagine glycans are attached at residues asparagine 51 and asparagine 78. A xylosyltransferase activity region spans residues 68–343 (LHVAIVCAGY…FLGYDGKLLR (276 aa)). Mn(2+) is bound by residues aspartate 172 and aspartate 174. Asparagine 202 is a glycosylation site (N-linked (GlcNAc...) asparagine). A glucuronyltransferase activity region spans residues 344 to 686 (RELFGCPNQF…LKYLTALQQA (343 aa)). Mn(2+)-binding residues include aspartate 492 and aspartate 494.

This sequence in the C-terminal section; belongs to the glycosyltransferase 49 family. In the N-terminal section; belongs to the glycosyltransferase 8 family. It belongs to the glycosyltransferase 8 family. Interacts with B4GAT1. Mn(2+) is required as a cofactor. Highly expressed in the testis and kidney, but weakly expressed in the heart and brain. Expressed during embryogenesis from 7 dpc.

It localises to the golgi apparatus membrane. It carries out the reaction 3-O-[beta-D-GlcA-(1-&gt;3)-beta-D-Xyl-(1-&gt;4)-Rib-ol-P-Rib-ol-P-3-beta-D-GalNAc-(1-&gt;3)-beta-D-GlcNAc-(1-&gt;4)-(O-6-P-alpha-D-Man)]-Thr-[protein] + UDP-alpha-D-xylose = 3-O-[alpha-D-Xyl-(1-&gt;3)-beta-D-GlcA-(1-&gt;4)-beta-D-Xyl-(1-&gt;4)-Rib-ol-P-Rib-ol-P-3-beta-D-GalNAc-(1-&gt;3)-beta-D-GlcNAc-(1-&gt;4)-(O-6-P-alpha-D-Man)]-Thr-[protein] + UDP + H(+). The catalysed reaction is 3-O-{(1-&gt;[3)-alpha-D-Xyl-(1-&gt;3)-beta-D-GlcA-(1-&gt;](n)-4)-beta-D-Xyl-(1-&gt;4)-Rib-ol-P-Rib-ol-P-3-beta-D-GalNAc-(1-&gt;3)-beta-D-GlcNAc-(1-&gt;4)-O-6-P-alpha-D-Man}-L-Thr-[protein] + UDP-alpha-D-glucuronate = 3-O-{beta-D-GlcA-(1-&gt;[3)-alpha-D-Xyl-(1-&gt;3)-beta-D-GlcA-(1-&gt;](n)-4)-beta-D-Xyl-(1-&gt;4)-Rib-ol-P-Rib-ol-P-3-beta-D-GalNAc-(1-&gt;3)-beta-D-GlcNAc-(1-&gt;4)-O-6-P-alpha-D-Man}-L-Thr-[protein] + UDP + H(+). The enzyme catalyses 3-O-{beta-D-GlcA-(1-&gt;[3)-alpha-D-Xyl-(1-&gt;3)-beta-D-GlcA-(1-&gt;](n)-4)-beta-D-Xyl-(1-&gt;4)-Rib-ol-P-Rib-ol-P-3-beta-D-GalNAc-(1-&gt;3)-beta-D-GlcNAc-(1-&gt;4)-O-6-P-alpha-D-Man}-L-Thr-[protein] + UDP-alpha-D-xylose = 3-O-{(1-&gt;[3)-alpha-D-Xyl-(1-&gt;3)-beta-D-GlcA-(1-&gt;](n+1)-4)-beta-D-Xyl-(1-&gt;4)-Rib-ol-P-Rib-ol-P-3-beta-D-GalNAc-(1-&gt;3)-beta-D-GlcNAc-(1-&gt;4)-O-6-P-alpha-D-Man}-L-Thr-[protein] + UDP + H(+). The protein operates within protein modification; protein glycosylation. In terms of biological role, bifunctional glycosyltransferase with both alpha-1,3-xylosyltransferase and beta-1,3-glucuronyltransferase activities involved in the maturation of alpha-dystroglycan (DAG1) by glycosylation leading to DAG1 binding to laminin G-like domain-containing extracellular proteins with high affinity and in a phosphorylated-O-mannosyl trisaccharide dependent manner. Elongates the glucuronyl-beta-1,4-xylose-beta disaccharide primer structure by adding repeating units [-3-Xylose-alpha-1,3-GlcA-beta-1-] to produce a heteropolysaccharide. Supports the maturation of DAG1 more effectively than LARGE1. In addition, can modify both heparan sulfate (HS)- and chondroitin/dermatan sulfate (CS/DS)-proteoglycans (PGs), namely GPC4, with a glycosaminoglycan (GAG)-like polysaccharide composed of xylose and glucuronic acid to confer laminin binding. This is Xylosyl- and glucuronyltransferase LARGE2 from Mus musculus (Mouse).